The following is a 288-amino-acid chain: ATP synthase gamma chain (288 aa).

Belongs to the ATPase gamma chain family. F-type ATPases have 2 components, CF(1) - the catalytic core - and CF(0) - the membrane proton channel. CF(1) has five subunits: alpha(3), beta(3), gamma(1), delta(1), epsilon(1). CF(0) has three main subunits: a, b and c.

The protein localises to the cell inner membrane. In terms of biological role, produces ATP from ADP in the presence of a proton gradient across the membrane. The gamma chain is believed to be important in regulating ATPase activity and the flow of protons through the CF(0) complex. The chain is ATP synthase gamma chain from Laribacter hongkongensis (strain HLHK9).